The following is a 166-amino-acid chain: Phosphopantetheine adenylyltransferase (166 aa).

Substrate is bound at residue Thr10. Residues 10 to 11 (TF) and His18 each bind ATP. Substrate is bound by residues Lys42, Leu75, and Arg89. Residues 90–92 (GVR), Glu100, and 125–131 (YTYVAST) each bind ATP.

This sequence belongs to the bacterial CoaD family. In terms of assembly, homohexamer. The cofactor is Mg(2+).

The protein resides in the cytoplasm. The enzyme catalyses (R)-4'-phosphopantetheine + ATP + H(+) = 3'-dephospho-CoA + diphosphate. It functions in the pathway cofactor biosynthesis; coenzyme A biosynthesis; CoA from (R)-pantothenate: step 4/5. Functionally, reversibly transfers an adenylyl group from ATP to 4'-phosphopantetheine, yielding dephospho-CoA (dPCoA) and pyrophosphate. In Chlorobaculum parvum (strain DSM 263 / NCIMB 8327) (Chlorobium vibrioforme subsp. thiosulfatophilum), this protein is Phosphopantetheine adenylyltransferase.